The following is a 169-amino-acid chain: Succinate dehydrogenase cytochrome b560 subunit, mitochondrial (169 aa).

Residues 1-29 (MAALLLRHVGRHCLRAHLSPQLCIRNAVP) constitute a mitochondrion transit peptide. The Mitochondrial matrix segment spans residues 30–62 (LGTTAKEEMERFWNKNLGSNRPLSPHITIYRWS). The helical transmembrane segment at 63–92 (LPMAMSICHRGTGIALSAGVSLFGLSALLL) threads the bilayer. Residues 93-112 (PGNFESHLELVKSLCLGPTL) are Mitochondrial intermembrane-facing. A helical membrane pass occupies residues 113 to 137 (IYTAKFGIVFPLMYHTWNGIRHLIW). Histidine 127 is a binding site for heme b. At 138 to 144 (DLGKGLT) the chain is on the mitochondrial matrix side. Residues 145-166 (IPQLTQSGVVVLILTVLSSVGL) traverse the membrane as a helical segment. Residues 167–169 (AAM) lie on the Mitochondrial intermembrane side of the membrane.

Belongs to the cytochrome b560 family. In terms of assembly, component of complex II composed of four subunits: the flavoprotein (FP) SDHA, iron-sulfur protein (IP) SDHB, and a cytochrome b560 composed of SDHC and SDHD. Requires heme b as cofactor. As to expression, detected in heart muscle (at protein level).

It localises to the mitochondrion inner membrane. The protein operates within carbohydrate metabolism; tricarboxylic acid cycle. Its function is as follows. Membrane-anchoring subunit of succinate dehydrogenase (SDH) that is involved in complex II of the mitochondrial electron transport chain and is responsible for transferring electrons from succinate to ubiquinone (coenzyme Q). SDH also oxidizes malate to the non-canonical enol form of oxaloacetate, enol-oxaloacetate. Enol-oxaloacetate, which is a potent inhibitor of the succinate dehydrogenase activity, is further isomerized into keto-oxaloacetate. This is Succinate dehydrogenase cytochrome b560 subunit, mitochondrial (SDHC) from Sus scrofa (Pig).